The following is a 313-amino-acid chain: Aspartate carbamoyltransferase catalytic subunit (313 aa).

R58 and T59 together coordinate carbamoyl phosphate. K86 contributes to the L-aspartate binding site. Residues R108, H136, and Q139 each contribute to the carbamoyl phosphate site. 2 residues coordinate L-aspartate: R169 and R223. Residues G264 and P265 each coordinate carbamoyl phosphate.

Belongs to the aspartate/ornithine carbamoyltransferase superfamily. ATCase family. As to quaternary structure, heterododecamer (2C3:3R2) of six catalytic PyrB chains organized as two trimers (C3), and six regulatory PyrI chains organized as three dimers (R2).

The catalysed reaction is carbamoyl phosphate + L-aspartate = N-carbamoyl-L-aspartate + phosphate + H(+). It participates in pyrimidine metabolism; UMP biosynthesis via de novo pathway; (S)-dihydroorotate from bicarbonate: step 2/3. Catalyzes the condensation of carbamoyl phosphate and aspartate to form carbamoyl aspartate and inorganic phosphate, the committed step in the de novo pyrimidine nucleotide biosynthesis pathway. The protein is Aspartate carbamoyltransferase catalytic subunit of Syntrophotalea carbinolica (strain DSM 2380 / NBRC 103641 / GraBd1) (Pelobacter carbinolicus).